Reading from the N-terminus, the 427-residue chain is Putative F-box protein At3g44060 (427 aa).

Residues 1-46 (MDCLPDDLLVQILYLLPTKEAVSTSVLSKRWRTLFTRSDNLDFHDP) enclose the F-box domain.

This Arabidopsis thaliana (Mouse-ear cress) protein is Putative F-box protein At3g44060.